A 532-amino-acid chain; its full sequence is Apolipoprotein N-acyltransferase (532 aa).

The next 6 helical transmembrane spans lie at 37–57, 75–95, 106–126, 128–148, 179–199, and 207–227; these read IFVAGFVSFPVLVWLIDGAIA, WWFGFGYFVSGLWWIGTALLV, LAVLGLPAFLALFYAFAAMIA, LLWSDGLGRILALAFGFALAE, VIGLVGMSALAVFVFAAPALL, and TGIGLAIFLALAHVGFGAWTL. Residues 245–494 enclose the CN hydrolase domain; sequence VQPSIAQAMK…VGVVDSYLPS (250 aa). Glutamate 289 functions as the Proton acceptor in the catalytic mechanism. Lysine 353 is a catalytic residue. The active-site Nucleophile is the cysteine 406. A helical membrane pass occupies residues 505–525; the sequence is GWIQTVLILLTLLAASVGLIL.

It belongs to the CN hydrolase family. Apolipoprotein N-acyltransferase subfamily.

Its subcellular location is the cell inner membrane. The catalysed reaction is N-terminal S-1,2-diacyl-sn-glyceryl-L-cysteinyl-[lipoprotein] + a glycerophospholipid = N-acyl-S-1,2-diacyl-sn-glyceryl-L-cysteinyl-[lipoprotein] + a 2-acyl-sn-glycero-3-phospholipid + H(+). It participates in protein modification; lipoprotein biosynthesis (N-acyl transfer). Its function is as follows. Catalyzes the phospholipid dependent N-acylation of the N-terminal cysteine of apolipoprotein, the last step in lipoprotein maturation. This chain is Apolipoprotein N-acyltransferase, found in Brucella suis biovar 1 (strain 1330).